We begin with the raw amino-acid sequence, 213 residues long: tRNA (guanine-N(7)-)-methyltransferase (213 aa).

The S-adenosyl-L-methionine site is built by glutamate 44, glutamate 69, asparagine 96, and aspartate 118. Residue aspartate 118 is part of the active site. Lysine 122 is a binding site for substrate. An interaction with RNA region spans residues arginine 124–arginine 129. Residues aspartate 154 and threonine 192–glutamate 195 each bind substrate.

The protein belongs to the class I-like SAM-binding methyltransferase superfamily. TrmB family.

It carries out the reaction guanosine(46) in tRNA + S-adenosyl-L-methionine = N(7)-methylguanosine(46) in tRNA + S-adenosyl-L-homocysteine. The protein operates within tRNA modification; N(7)-methylguanine-tRNA biosynthesis. Its function is as follows. Catalyzes the formation of N(7)-methylguanine at position 46 (m7G46) in tRNA. The polypeptide is tRNA (guanine-N(7)-)-methyltransferase (Latilactobacillus sakei subsp. sakei (strain 23K) (Lactobacillus sakei subsp. sakei)).